A 324-amino-acid polypeptide reads, in one-letter code: Adenine deaminase (324 aa).

Zn(2+) is bound by residues histidine 8, histidine 10, and histidine 186. Glutamate 189 serves as the catalytic Proton donor. Aspartate 267 provides a ligand contact to Zn(2+). Residue aspartate 268 participates in substrate binding.

It belongs to the metallo-dependent hydrolases superfamily. Adenosine and AMP deaminases family. Adenine deaminase type 2 subfamily. Requires Zn(2+) as cofactor.

The enzyme catalyses adenine + H2O + H(+) = hypoxanthine + NH4(+). Its function is as follows. Catalyzes the hydrolytic deamination of adenine to hypoxanthine. Plays an important role in the purine salvage pathway and in nitrogen catabolism. The chain is Adenine deaminase from Mesorhizobium japonicum (strain LMG 29417 / CECT 9101 / MAFF 303099) (Mesorhizobium loti (strain MAFF 303099)).